The chain runs to 860 residues: Leucine--tRNA ligase (860 aa).

The 'HIGH' region motif lies at 42 to 52; sequence PYPSGRLHMGH. Residues 619-623 carry the 'KMSKS' region motif; it reads KMSKS. Lysine 622 lines the ATP pocket.

Belongs to the class-I aminoacyl-tRNA synthetase family.

The protein localises to the cytoplasm. It catalyses the reaction tRNA(Leu) + L-leucine + ATP = L-leucyl-tRNA(Leu) + AMP + diphosphate. This is Leucine--tRNA ligase from Proteus mirabilis (strain HI4320).